The sequence spans 228 residues: 7-cyano-7-deazaguanine synthase (228 aa).

11-21 (LSGGLDSATVL) serves as a coordination point for ATP. Residues cysteine 191, cysteine 201, cysteine 204, and cysteine 207 each coordinate Zn(2+).

The protein belongs to the QueC family. Zn(2+) is required as a cofactor.

It catalyses the reaction 7-carboxy-7-deazaguanine + NH4(+) + ATP = 7-cyano-7-deazaguanine + ADP + phosphate + H2O + H(+). It functions in the pathway purine metabolism; 7-cyano-7-deazaguanine biosynthesis. Functionally, catalyzes the ATP-dependent conversion of 7-carboxy-7-deazaguanine (CDG) to 7-cyano-7-deazaguanine (preQ(0)). The protein is 7-cyano-7-deazaguanine synthase of Magnetococcus marinus (strain ATCC BAA-1437 / JCM 17883 / MC-1).